The sequence spans 636 residues: Chaperone protein HtpG (636 aa).

Residues 1 to 345 (MSESATANAN…SSDLPLNVSR (345 aa)) form an a; substrate-binding region. Residues 346-562 (EILQQSKDID…EHDPSGNLAR (217 aa)) are b. Positions 563–636 (LMKAAGQPMP…NDLMMALSAK (74 aa)) are c.

This sequence belongs to the heat shock protein 90 family. As to quaternary structure, homodimer.

The protein localises to the cytoplasm. Functionally, molecular chaperone. Has ATPase activity. The polypeptide is Chaperone protein HtpG (Dechloromonas aromatica (strain RCB)).